We begin with the raw amino-acid sequence, 424 residues long: Enolase (424 aa).

A (2R)-2-phosphoglycerate-binding site is contributed by Q162. The active-site Proton donor is E204. Mg(2+)-binding residues include D241, E284, and D311. K336, R365, S366, and K387 together coordinate (2R)-2-phosphoglycerate. K336 (proton acceptor) is an active-site residue.

It belongs to the enolase family. Mg(2+) serves as cofactor.

Its subcellular location is the cytoplasm. The protein resides in the secreted. The protein localises to the cell surface. The catalysed reaction is (2R)-2-phosphoglycerate = phosphoenolpyruvate + H2O. Its pathway is carbohydrate degradation; glycolysis; pyruvate from D-glyceraldehyde 3-phosphate: step 4/5. In terms of biological role, catalyzes the reversible conversion of 2-phosphoglycerate (2-PG) into phosphoenolpyruvate (PEP). It is essential for the degradation of carbohydrates via glycolysis. The sequence is that of Enolase from Parvibaculum lavamentivorans (strain DS-1 / DSM 13023 / NCIMB 13966).